A 155-amino-acid chain; its full sequence is NADPH-dependent 7-cyano-7-deazaguanine reductase (155 aa).

The active-site Thioimide intermediate is the Cys-53. The active-site Proton donor is the Asp-60. Residues 75–77 (VES) and 94–95 (HE) contribute to the substrate site.

Belongs to the GTP cyclohydrolase I family. QueF type 1 subfamily.

The protein resides in the cytoplasm. It carries out the reaction 7-aminomethyl-7-carbaguanine + 2 NADP(+) = 7-cyano-7-deazaguanine + 2 NADPH + 3 H(+). The protein operates within tRNA modification; tRNA-queuosine biosynthesis. In terms of biological role, catalyzes the NADPH-dependent reduction of 7-cyano-7-deazaguanine (preQ0) to 7-aminomethyl-7-deazaguanine (preQ1). The chain is NADPH-dependent 7-cyano-7-deazaguanine reductase from Brucella anthropi (strain ATCC 49188 / DSM 6882 / CCUG 24695 / JCM 21032 / LMG 3331 / NBRC 15819 / NCTC 12168 / Alc 37) (Ochrobactrum anthropi).